A 157-amino-acid polypeptide reads, in one-letter code: Holo-[acyl-carrier-protein] synthase (157 aa).

The Mg(2+) site is built by D8 and E59.

The protein belongs to the P-Pant transferase superfamily. AcpS family. Mg(2+) is required as a cofactor.

It is found in the cytoplasm. It carries out the reaction apo-[ACP] + CoA = holo-[ACP] + adenosine 3',5'-bisphosphate + H(+). Functionally, transfers the 4'-phosphopantetheine moiety from coenzyme A to a Ser of acyl-carrier-protein. The chain is Holo-[acyl-carrier-protein] synthase from Gluconobacter oxydans (strain 621H) (Gluconobacter suboxydans).